A 347-amino-acid polypeptide reads, in one-letter code: CCN family member 2 (347 aa).

A signal peptide spans 1 to 24 (MLASVAGPVSLALVLLLCTRPATG). The region spanning 25 to 96 (QDCSAQCQCA…NRKIGVCTAK (72 aa)) is the IGFBP N-terminal domain. 6 disulfides stabilise this stretch: cysteine 27–cysteine 52, cysteine 31–cysteine 54, cysteine 33–cysteine 55, cysteine 41–cysteine 58, cysteine 66–cysteine 80, and cysteine 72–cysteine 93. The region spanning 99 to 165 (APCVFGGSVY…GKCCEEWVCD (67 aa)) is the VWFC domain. Positions 196 to 241 (NCLVQTTEWSACSKTCGMGISTRVTNDNTFCRLEKQSRLCMVRPCE) constitute a TSP type-1 domain. The segment at 245-347 (EENIKKGKKC…YYRKMYGDMA (103 aa)) is heparin-binding. 5 disulfide bridges follow: cysteine 254/cysteine 291, cysteine 271/cysteine 305, cysteine 282/cysteine 321, cysteine 285/cysteine 323, and cysteine 290/cysteine 327. The CTCK domain maps to 254 to 328 (CIRTPKIAKP…KTCACHYNCP (75 aa)).

It belongs to the CCN family. In terms of assembly, monomer. Interacts with TSKU.

It is found in the secreted. Its subcellular location is the extracellular space. The protein resides in the extracellular matrix. Major connective tissue mitoattractant secreted by vascular endothelial cells. Promotes proliferation and differentiation of chondrocytes. Is involved in the stimulation of osteoblast differentiation and has a critical role in osteogenesis. Mediates heparin- and divalent cation-dependent cell adhesion in many cell types including fibroblasts, myofibroblasts, endothelial and epithelial cells. Enhances fibroblast growth factor-induced DNA synthesis. This chain is CCN family member 2, found in Rattus norvegicus (Rat).